The sequence spans 266 residues: uncharacterized protein (266 aa).

The N-terminal stretch at 1–22 is a signal peptide; the sequence is MRYLKKLAWFISVIILGIFIIG. Cysteine 23 is lipidated: N-palmitoyl cysteine. Residue cysteine 23 is the site of S-diacylglycerol cysteine attachment.

It belongs to the staphylococcal tandem lipoprotein family.

The protein resides in the cell membrane. This is an uncharacterized protein from Staphylococcus aureus (strain USA300).